A 222-amino-acid chain; its full sequence is UPF0502 protein XAC4278 (222 aa).

The protein belongs to the UPF0502 family.

This is UPF0502 protein XAC4278 from Xanthomonas axonopodis pv. citri (strain 306).